Here is a 232-residue protein sequence, read N- to C-terminus: Ribose-5-phosphate isomerase A (232 aa).

Substrate contacts are provided by residues 31–34 (TGST), 87–90 (DGAD), and 100–103 (KGGG). Glutamate 109 serves as the catalytic Proton acceptor. Lysine 127 lines the substrate pocket.

Belongs to the ribose 5-phosphate isomerase family. Homodimer.

The catalysed reaction is aldehydo-D-ribose 5-phosphate = D-ribulose 5-phosphate. The protein operates within carbohydrate degradation; pentose phosphate pathway; D-ribose 5-phosphate from D-ribulose 5-phosphate (non-oxidative stage): step 1/1. Functionally, catalyzes the reversible conversion of ribose-5-phosphate to ribulose 5-phosphate. The polypeptide is Ribose-5-phosphate isomerase A (Bifidobacterium longum (strain DJO10A)).